A 540-amino-acid chain; its full sequence is Cytokinin dehydrogenase 5 (540 aa).

Residues methionine 1–alanine 22 form the signal peptide. An FAD-binding PCMH-type domain is found at serine 63–alanine 241. FAD-binding residues include alanine 97, glycine 99, and glycine 101. A Pros-8alpha-FAD histidine modification is found at histidine 102. Residues serine 103, glutamine 107, aspartate 165, threonine 170, serine 176, isoleucine 180, and isoleucine 231 each coordinate FAD. Asparagine 310 and asparagine 406 each carry an N-linked (GlcNAc...) asparagine glycan. Residues tyrosine 479 and glutamine 517 each coordinate FAD.

It belongs to the oxygen-dependent FAD-linked oxidoreductase family. The cofactor is FAD. Expressed in the developing leaf petioles and in the rib zone of the axillary shoot meristems. In roots, expressed in the vascular cylinder within the root apical meristem and only faintly detectable in the differentiated root.

Its subcellular location is the secreted. It is found in the extracellular space. It carries out the reaction N(6)-dimethylallyladenine + A + H2O = 3-methyl-2-butenal + adenine + AH2. Catalyzes the oxidation of cytokinins, a family of N(6)-substituted adenine derivatives that are plant hormones, where the substituent is an isopentenyl group. In association with CKX3 regulates the activity of the reproductive meristems, flower organ size and ovule formation. This chain is Cytokinin dehydrogenase 5 (CKX5), found in Arabidopsis thaliana (Mouse-ear cress).